Reading from the N-terminus, the 336-residue chain is Casein kinase I isoform beta (336 aa).

The region spanning 17–285 (YKLVREIGFG…YLRQLFRLLF (269 aa)) is the Protein kinase domain. Residues 23-31 (IGFGSFGHV) and Lys-46 each bind ATP. The active-site Proton acceptor is Asp-136. Over residues 309-320 (ASSSSGEGQQAQ) the composition is skewed to low complexity. Residues 309-336 (ASSSSGEGQQAQTPTGKSDNTKSEMKHS) form a disordered region. Residues 327 to 336 (DNTKSEMKHS) are compositionally biased toward basic and acidic residues.

Belongs to the protein kinase superfamily. CK1 Ser/Thr protein kinase family. Casein kinase I subfamily. In terms of assembly, monomer.

It is found in the cytoplasm. The enzyme catalyses L-seryl-[protein] + ATP = O-phospho-L-seryl-[protein] + ADP + H(+). It carries out the reaction L-threonyl-[protein] + ATP = O-phospho-L-threonyl-[protein] + ADP + H(+). Functionally, casein kinases are operationally defined by their preferential utilization of acidic proteins such as caseins as substrates. It can phosphorylate a large number of proteins. Participates in Wnt signaling. In Bos taurus (Bovine), this protein is Casein kinase I isoform beta (CSNK1B).